Reading from the N-terminus, the 332-residue chain is Solute carrier family 25 member 16 (332 aa).

Solcar repeat units follow at residues 34–120 (FYWL…YKTL), 128–216 (SGHV…LKSV), and 238–328 (LKTH…MKQF). Helical transmembrane passes span 37–57 (LRSFLAGGIAGCCAKTTVAPL), 88–108 (GFLGLYKGNGAMMIRIFPYGA), 134–154 (LMAGSMAGMTAVICTYPLDMV), 191–211 (GLMPTILGMAPYAGVSFFTFG), 244–264 (LLCGGVAGAIAQTISYPFDVT), and 299–319 (GLYRGLSLNYIRCIPSQAVAF).

This sequence belongs to the mitochondrial carrier (TC 2.A.29) family.

It localises to the mitochondrion inner membrane. Its function is as follows. May be involved in the transport of coenzyme A in the mitochondrial matrix. Very little is known about the physiological function of this carrier. This chain is Solute carrier family 25 member 16, found in Homo sapiens (Human).